The primary structure comprises 215 residues: MTQALADMRRDYTRDGLSEAQAPDEPFALFHQWFADAVKTEQPPVEANAMTLATVDQDGRPHCRILLLKGLDAQGFTFFTNYQSAKGQQLAARPFAAMTFFWPTLERQVRIEGRVVKVTPEESDAYYQVRPLGSRLGAWASPQSQVIRDREELQDLLKATEQRFSDTQPDCPEHWGGYRLLPERIEFWQGRASRLHDRLNYRLQDSQWTRERLAP.

Substrate contacts are provided by residues 9-12 and K69; that span reads RRDY. FMN is bound by residues 64-69, 79-80, K86, and Q108; these read RILLLK and FT. The substrate site is built by Y126, R130, and S134. FMN is bound by residues 143–144 and W188; that span reads QS. 194–196 lines the substrate pocket; the sequence is RLH. FMN is bound at residue R198.

It belongs to the pyridoxamine 5'-phosphate oxidase family. As to quaternary structure, homodimer. It depends on FMN as a cofactor.

It catalyses the reaction pyridoxamine 5'-phosphate + O2 + H2O = pyridoxal 5'-phosphate + H2O2 + NH4(+). The catalysed reaction is pyridoxine 5'-phosphate + O2 = pyridoxal 5'-phosphate + H2O2. It functions in the pathway cofactor metabolism; pyridoxal 5'-phosphate salvage; pyridoxal 5'-phosphate from pyridoxamine 5'-phosphate: step 1/1. It participates in cofactor metabolism; pyridoxal 5'-phosphate salvage; pyridoxal 5'-phosphate from pyridoxine 5'-phosphate: step 1/1. In terms of biological role, catalyzes the oxidation of either pyridoxine 5'-phosphate (PNP) or pyridoxamine 5'-phosphate (PMP) into pyridoxal 5'-phosphate (PLP). This Pseudomonas fluorescens (strain SBW25) protein is Pyridoxine/pyridoxamine 5'-phosphate oxidase.